Consider the following 845-residue polypeptide: uncharacterized protein (845 aa).

Over residues 224 to 241 (SNNIPTGIQDSSKYTVNG) the composition is skewed to polar residues. 7 disordered regions span residues 224-244 (SNNIPTGIQDSSKYTVNGPTE), 324-346 (QGTESISFASKNNSAPSADANNG), 383-434 (RTAN…EGSA), 456-485 (VKASNISTEKSKTIAKPKPAKELSPQATLN), 519-619 (NMTL…PKNS), 674-701 (VVSRTVTSPKSGAYASPSKASYNQDSSP), and 739-785 (RKST…ANKS). Over residues 390–399 (PTKKSNRSEQ) the composition is skewed to basic and acidic residues. The segment covering 400–422 (SKTVANTNVGSKNGTTPRSFAQK) has biased composition (polar residues). The span at 534-546 (NSWRSKYLSEGKN) shows a compositional bias: basic and acidic residues. A compositionally biased stretch (low complexity) spans 563 to 576 (SSLASPTKSSASPL). The residue at position 567 (S567) is a Phosphoserine. Basic and acidic residues-rich tracts occupy residues 579–588 (APKETPERLC) and 600–614 (ANLKESELPKEKSDI). Composition is skewed to polar residues over residues 674-683 (VVSRTVTSPK), 691-701 (SKASYNQDSSP), and 743-760 (ADSLSSPKRQSVPSTPKA).

It localises to the mitochondrion. This is an uncharacterized protein from Schizosaccharomyces pombe (strain 972 / ATCC 24843) (Fission yeast).